Here is a 260-residue protein sequence, read N- to C-terminus: Phosphoribosylaminoimidazole-succinocarboxamide synthase (260 aa).

It belongs to the SAICAR synthetase family.

The catalysed reaction is 5-amino-1-(5-phospho-D-ribosyl)imidazole-4-carboxylate + L-aspartate + ATP = (2S)-2-[5-amino-1-(5-phospho-beta-D-ribosyl)imidazole-4-carboxamido]succinate + ADP + phosphate + 2 H(+). Its pathway is purine metabolism; IMP biosynthesis via de novo pathway; 5-amino-1-(5-phospho-D-ribosyl)imidazole-4-carboxamide from 5-amino-1-(5-phospho-D-ribosyl)imidazole-4-carboxylate: step 1/2. The polypeptide is Phosphoribosylaminoimidazole-succinocarboxamide synthase (Pelagibacter ubique (strain HTCC1062)).